Here is a 404-residue protein sequence, read N- to C-terminus: Tryptophan synthase beta chain (404 aa).

Lys98 is modified (N6-(pyridoxal phosphate)lysine).

The protein belongs to the TrpB family. In terms of assembly, tetramer of two alpha and two beta chains. It depends on pyridoxal 5'-phosphate as a cofactor.

It carries out the reaction (1S,2R)-1-C-(indol-3-yl)glycerol 3-phosphate + L-serine = D-glyceraldehyde 3-phosphate + L-tryptophan + H2O. Its pathway is amino-acid biosynthesis; L-tryptophan biosynthesis; L-tryptophan from chorismate: step 5/5. In terms of biological role, the beta subunit is responsible for the synthesis of L-tryptophan from indole and L-serine. This Acidiphilium cryptum (strain JF-5) protein is Tryptophan synthase beta chain.